A 53-amino-acid polypeptide reads, in one-letter code: MHILTRSSKNAFPRSRSRQDIHISSHIHRDTSNSALLKILVITRTRLDSFVKT.

The span at 1–10 (MHILTRSSKN) shows a compositional bias: polar residues. The tract at residues 1-25 (MHILTRSSKNAFPRSRSRQDIHISS) is disordered.

This is an uncharacterized protein from Saccharomyces cerevisiae (strain ATCC 204508 / S288c) (Baker's yeast).